The chain runs to 408 residues: Photox toxin (408 aa).

The tract at residues 168 to 196 (NNQQHIKDSDGRKPVNNMPPPPPPPMADK) is disordered. Positions 184–193 (NMPPPPPPPM) are enriched in pro residues. The TR mART core domain occupies 190–393 (PPPMADKTQK…LRLTDDASAD (204 aa)). Catalysis depends on residues arginine 288, serine 318, and glutamate 355.

It in the C-terminal section; belongs to the SpvB family.

It carries out the reaction L-arginyl-[protein] + NAD(+) = N(omega)-(ADP-D-ribosyl)-L-arginyl-[protein] + nicotinamide + H(+). In terms of biological role, mono-ADP-ribosylates chicken skeletal alpha-actin and human non-skeletal beta- and gamma-actin. Mono-ADP-ribosylates 'Arg-177' of yeast actin, blocking its ability to polymerize. Does not possess NAD(+)-glycohydrolase activity, unlike most mART enzymes. Upon expression in S.cerevisiae almost completely inhibits growth. This Photorhabdus laumondii subsp. laumondii (strain DSM 15139 / CIP 105565 / TT01) (Photorhabdus luminescens subsp. laumondii) protein is Photox toxin (phxA).